The primary structure comprises 794 residues: Zinc finger protein 148 (794 aa).

Residue Lys6 forms a Glycyl lysine isopeptide (Lys-Gly) (interchain with G-Cter in SUMO2) linkage. Residue Ser51 is modified to Phosphoserine. Glycyl lysine isopeptide (Lys-Gly) (interchain with G-Cter in SUMO2) cross-links involve residues Lys88, Lys115, and Lys132. A C2H2-type 1 zinc finger spans residues 171 to 193 (HVCEHCNAAFRTNYHLQRHVFIH). Thr194 is subject to Phosphothreonine. C2H2-type zinc fingers lie at residues 199-221 (FQCS…EKIH) and 227-249 (FRCD…KRTH). Residue Ser250 is modified to Phosphoserine. A C2H2-type 4 zinc finger spans residues 255–278 (YQCEYCLQYFSRTDRVLKHKRMCH). Lys291 participates in a covalent cross-link: Glycyl lysine isopeptide (Lys-Gly) (interchain with G-Cter in SUMO2). A disordered region spans residues 298 to 346 (EEDSGFSTSPKDNSLPKKKRQKPEKKSSGMDKESVLDKSDTKKDRNDYL). 2 positions are modified to phosphoserine: Ser301 and Ser306. Lys308 is covalently cross-linked (Glycyl lysine isopeptide (Lys-Gly) (interchain with G-Cter in SUMO2)). The segment covering 321–344 (EKKSSGMDKESVLDKSDTKKDRND) has biased composition (basic and acidic residues). A Glycyl lysine isopeptide (Lys-Gly) (interchain with G-Cter in SUMO1); alternate cross-link involves residue Lys356. Residue Lys356 forms a Glycyl lysine isopeptide (Lys-Gly) (interchain with G-Cter in SUMO2); alternate linkage. Lys402 is covalently cross-linked (Glycyl lysine isopeptide (Lys-Gly) (interchain with G-Cter in SUMO2)). Ser412 bears the Phosphoserine mark. Glycyl lysine isopeptide (Lys-Gly) (interchain with G-Cter in SUMO2) cross-links involve residues Lys421 and Lys424. Over residues 574–588 (NSSDVPEVTQSENVG) the composition is skewed to polar residues. The disordered stretch occupies residues 574–596 (NSSDVPEVTQSENVGSSSQASSS). At Lys607 the chain carries N6-acetyllysine. Residues Ser665 and Ser784 each carry the phosphoserine modification.

The protein belongs to the krueppel C2H2-type zinc-finger protein family. In terms of assembly, interacts with HNRNPDL. Interacts with the 5FMC complex; the interaction requires association with CHTOP. Interacts with CAVIN1. Post-translationally, sumoylated with SUMO2. Desumoylated by SENP3, resulting in the stimulation of transcription of its target genes. As to expression, expressed in heart, lung, kidney, skeletal muscle, liver, brain and spleen.

The protein localises to the nucleus. Functionally, involved in transcriptional regulation. Represses the transcription of a number of genes including gastrin, stromelysin and enolase. Binds to the G-rich box in the enhancer region of these genes. This Rattus norvegicus (Rat) protein is Zinc finger protein 148 (Znf148).